The chain runs to 191 residues: Probable protein adenylyltransferase HI_0977 (191 aa).

The Fido domain maps to 37–162 (GSTKGLQQIH…NDLEIRFLLQ (126 aa)). Residues 67 to 68 (KG), 112 to 114 (GNG), Arg-118, and Gln-145 contribute to the ATP site.

This sequence belongs to the fic family.

It catalyses the reaction L-tyrosyl-[protein] + ATP = O-(5'-adenylyl)-L-tyrosyl-[protein] + diphosphate. It carries out the reaction L-threonyl-[protein] + ATP = 3-O-(5'-adenylyl)-L-threonyl-[protein] + diphosphate. Probable adenylyltransferase that mediates the addition of adenosine 5'-monophosphate (AMP) to specific residues of target proteins. In Haemophilus influenzae (strain ATCC 51907 / DSM 11121 / KW20 / Rd), this protein is Probable protein adenylyltransferase HI_0977.